A 301-amino-acid polypeptide reads, in one-letter code: Immediate early response gene 5-like protein (301 aa).

It belongs to the IER family.

This is Immediate early response gene 5-like protein (ier5l) from Danio rerio (Zebrafish).